Consider the following 271-residue polypeptide: 3-methyl-2-oxobutanoate hydroxymethyltransferase (271 aa).

Asp53 and Asp92 together coordinate Mg(2+). 3-methyl-2-oxobutanoate contacts are provided by residues 53 to 54 (DS), Asp92, and Lys120. Mg(2+) is bound at residue Glu122. The active-site Proton acceptor is the Glu189.

It belongs to the PanB family. As to quaternary structure, homodecamer; pentamer of dimers. It depends on Mg(2+) as a cofactor.

It is found in the cytoplasm. The catalysed reaction is 3-methyl-2-oxobutanoate + (6R)-5,10-methylene-5,6,7,8-tetrahydrofolate + H2O = 2-dehydropantoate + (6S)-5,6,7,8-tetrahydrofolate. Its pathway is cofactor biosynthesis; (R)-pantothenate biosynthesis; (R)-pantoate from 3-methyl-2-oxobutanoate: step 1/2. In terms of biological role, catalyzes the reversible reaction in which hydroxymethyl group from 5,10-methylenetetrahydrofolate is transferred onto alpha-ketoisovalerate to form ketopantoate. This is 3-methyl-2-oxobutanoate hydroxymethyltransferase from Paraburkholderia phytofirmans (strain DSM 17436 / LMG 22146 / PsJN) (Burkholderia phytofirmans).